The chain runs to 283 residues: Diaminopimelate epimerase (283 aa).

Asn14, Gln47, and Asn67 together coordinate substrate. The Proton donor role is filled by Cys76. Substrate-binding positions include 77-78, Asn164, Asn197, and 215-216; these read GN and ER. Cys224 serves as the catalytic Proton acceptor. 225–226 lines the substrate pocket; it reads GT.

It belongs to the diaminopimelate epimerase family. As to quaternary structure, homodimer.

It localises to the cytoplasm. The enzyme catalyses (2S,6S)-2,6-diaminopimelate = meso-2,6-diaminopimelate. It functions in the pathway amino-acid biosynthesis; L-lysine biosynthesis via DAP pathway; DL-2,6-diaminopimelate from LL-2,6-diaminopimelate: step 1/1. Catalyzes the stereoinversion of LL-2,6-diaminopimelate (L,L-DAP) to meso-diaminopimelate (meso-DAP), a precursor of L-lysine and an essential component of the bacterial peptidoglycan. This Neisseria meningitidis serogroup A / serotype 4A (strain DSM 15465 / Z2491) protein is Diaminopimelate epimerase.